The following is a 389-amino-acid chain: Lipid-A-disaccharide synthase (389 aa).

This sequence belongs to the LpxB family.

It catalyses the reaction a lipid X + a UDP-2-N,3-O-bis[(3R)-3-hydroxyacyl]-alpha-D-glucosamine = a lipid A disaccharide + UDP + H(+). It participates in bacterial outer membrane biogenesis; LPS lipid A biosynthesis. In terms of biological role, condensation of UDP-2,3-diacylglucosamine and 2,3-diacylglucosamine-1-phosphate to form lipid A disaccharide, a precursor of lipid A, a phosphorylated glycolipid that anchors the lipopolysaccharide to the outer membrane of the cell. This chain is Lipid-A-disaccharide synthase, found in Burkholderia cenocepacia (strain ATCC BAA-245 / DSM 16553 / LMG 16656 / NCTC 13227 / J2315 / CF5610) (Burkholderia cepacia (strain J2315)).